We begin with the raw amino-acid sequence, 102 residues long: Late embryogenesis abundant protein D-19 (102 aa).

The tract at residues 1-102 (MASEQYQAMR…IDESKFRTKN (102 aa)) is disordered. Positions 48–58 (EGRHKGGETRK) are enriched in basic and acidic residues.

Belongs to the small hydrophilic plant seed protein family.

In terms of biological role, LEA proteins are late embryonic proteins abundant in higher plant seed embryos. There are two subsets of LEA proteins (5a and 5b), the first ones are expressed when the cotyledon weight reach 80 mg and the second set are expressed above 100 mg. The function of those proteins is not known. This chain is Late embryogenesis abundant protein D-19, found in Gossypium hirsutum (Upland cotton).